Reading from the N-terminus, the 239-residue chain is ATP synthase subunit b (239 aa).

Residues 1–22 are compositionally biased toward low complexity; the sequence is MYAQEAQQKPEAQQSAPAAEQP. A disordered region spans residues 1 to 64; the sequence is MYAQEAQQKP…GEEEAGEHME (64 aa). Basic and acidic residues-rich tracts occupy residues 23–33 and 45–64; these read KPAEEQAKPEQ and ELSE…EHME. A helical transmembrane segment spans residues 85-105; that stretch reads SYWIAMAFNFAIVFALLGWAM.

It belongs to the ATPase B chain family. F-type ATPases have 2 components, F(1) - the catalytic core - and F(0) - the membrane proton channel. F(1) has five subunits: alpha(3), beta(3), gamma(1), delta(1), epsilon(1). F(0) has three main subunits: a(1), b(2) and c(10-14). The alpha and beta chains form an alternating ring which encloses part of the gamma chain. F(1) is attached to F(0) by a central stalk formed by the gamma and epsilon chains, while a peripheral stalk is formed by the delta and b chains.

Its subcellular location is the cell inner membrane. In terms of biological role, f(1)F(0) ATP synthase produces ATP from ADP in the presence of a proton or sodium gradient. F-type ATPases consist of two structural domains, F(1) containing the extramembraneous catalytic core and F(0) containing the membrane proton channel, linked together by a central stalk and a peripheral stalk. During catalysis, ATP synthesis in the catalytic domain of F(1) is coupled via a rotary mechanism of the central stalk subunits to proton translocation. Functionally, component of the F(0) channel, it forms part of the peripheral stalk, linking F(1) to F(0). This is ATP synthase subunit b from Koribacter versatilis (strain Ellin345).